The primary structure comprises 449 residues: Sensor protein QseC (449 aa).

Over 1–12 (MKFTQRLSLRVR) the chain is Cytoplasmic. The helical transmembrane segment at 13 to 33 (LTLIFLILASVTWLLSSFVAW) threads the bilayer. Topologically, residues 34-156 (KQTTDNVDEL…QEWEYREDMA (123 aa)) are periplasmic. The helical transmembrane segment at 157–177 (LAIVAGQLIPWLVALPIMLII) threads the bilayer. Topologically, residues 178–449 (MMVLLGRELA…QGGFEAKVSW (272 aa)) are cytoplasmic. In terms of domain architecture, Histidine kinase spans 243-449 (DAAHELRSPL…QGGFEAKVSW (207 aa)). His-246 is subject to Phosphohistidine; by autocatalysis.

It is found in the cell inner membrane. The enzyme catalyses ATP + protein L-histidine = ADP + protein N-phospho-L-histidine.. Functionally, member of a two-component regulatory system QseB/QseC. Activates the flagella regulon by activating transcription of FlhDC. May activate QseB by phosphorylation. The chain is Sensor protein QseC (qseC) from Escherichia coli (strain K12).